The sequence spans 261 residues: Imidazole glycerol phosphate synthase subunit HisF (261 aa).

Active-site residues include aspartate 16 and aspartate 135.

Belongs to the HisA/HisF family. As to quaternary structure, heterodimer of HisH and HisF.

Its subcellular location is the cytoplasm. The enzyme catalyses 5-[(5-phospho-1-deoxy-D-ribulos-1-ylimino)methylamino]-1-(5-phospho-beta-D-ribosyl)imidazole-4-carboxamide + L-glutamine = D-erythro-1-(imidazol-4-yl)glycerol 3-phosphate + 5-amino-1-(5-phospho-beta-D-ribosyl)imidazole-4-carboxamide + L-glutamate + H(+). It participates in amino-acid biosynthesis; L-histidine biosynthesis; L-histidine from 5-phospho-alpha-D-ribose 1-diphosphate: step 5/9. In terms of biological role, IGPS catalyzes the conversion of PRFAR and glutamine to IGP, AICAR and glutamate. The HisF subunit catalyzes the cyclization activity that produces IGP and AICAR from PRFAR using the ammonia provided by the HisH subunit. The chain is Imidazole glycerol phosphate synthase subunit HisF from Mycolicibacterium smegmatis (strain ATCC 700084 / mc(2)155) (Mycobacterium smegmatis).